A 577-amino-acid polypeptide reads, in one-letter code: Arginine--tRNA ligase (577 aa).

Residues 132–142 carry the 'HIGH' region motif; sequence ANPTGPLHVGH.

This sequence belongs to the class-I aminoacyl-tRNA synthetase family. As to quaternary structure, monomer.

It localises to the cytoplasm. It catalyses the reaction tRNA(Arg) + L-arginine + ATP = L-arginyl-tRNA(Arg) + AMP + diphosphate. The sequence is that of Arginine--tRNA ligase from Janthinobacterium sp. (strain Marseille) (Minibacterium massiliensis).